The following is a 338-amino-acid chain: RNA 3'-terminal phosphate cyclase (338 aa).

Residues Gln103 and 283-287 each bind ATP; that span reads YLADQ. The active-site Tele-AMP-histidine intermediate is the His308.

It belongs to the RNA 3'-terminal cyclase family. Type 1 subfamily.

The protein resides in the cytoplasm. The enzyme catalyses a 3'-end 3'-phospho-ribonucleotide-RNA + ATP = a 3'-end 2',3'-cyclophospho-ribonucleotide-RNA + AMP + diphosphate. Its function is as follows. Catalyzes the conversion of 3'-phosphate to a 2',3'-cyclic phosphodiester at the end of RNA. The mechanism of action of the enzyme occurs in 3 steps: (A) adenylation of the enzyme by ATP; (B) transfer of adenylate to an RNA-N3'P to produce RNA-N3'PP5'A; (C) and attack of the adjacent 2'-hydroxyl on the 3'-phosphorus in the diester linkage to produce the cyclic end product. The biological role of this enzyme is unknown but it is likely to function in some aspects of cellular RNA processing. In Escherichia coli O45:K1 (strain S88 / ExPEC), this protein is RNA 3'-terminal phosphate cyclase.